The primary structure comprises 637 residues: Keratin, type II cytoskeletal 1 (637 aa).

Residues 1–187 are head; the sequence is MSLQCSSRSL…DPQIQKVKSQ (187 aa). Residue arginine 12 is modified to Omega-N-methylarginine. Serine 21 and serine 24 each carry phosphoserine. Arginine 49 is modified (omega-N-methylarginine). A Phosphoserine modification is found at serine 67. Residues 180-328 are a coiled coil; the sequence is QIQKVKSQER…DIDFFSALYQ (149 aa). Residues 188 to 223 are coil 1A; sequence EREQIKSLNDKFASFIDKVRFLEQQNQVLQTKWELL. Positions 188–501 constitute an IF rod domain; that stretch reads EREQIKSLND…KLLEGEEIRM (314 aa). The linker 1 stretch occupies residues 224 to 243; that stretch reads QQVDTTTRTQNLDPFFENYI. A coil 1B region spans residues 244–334; sequence SILRRKVDSL…ALYQMEMSQM (91 aa). Lysine 284 bears the N6,N6-dimethyllysine mark. Positions 335 to 358 are linker 12; it reads QTQISETNVVLSMDNNRSLDLDGI. At serine 352 the chain carries Phosphoserine. Residues 359 to 497 are coil 2; sequence ISEVKAQYDS…ATYKKLLEGE (139 aa). The stretch at 397–483 forms a coiled coil; sequence DSVRNTKMEI…QELMNTKLAL (87 aa). The segment at 498–637 is tail; that stretch reads EIRMSGECTP…VSTSYSRGTK (140 aa). Disordered regions lie at residues 505–533 and 563–637; these read CTPNVSVSVSTSHTSMSGSSSRGGGSGGG and YGGG…RGTK. The span at 509–524 shows a compositional bias: low complexity; the sequence is VSVSVSTSHTSMSGSS. Residues arginine 526, arginine 585, and arginine 607 each carry the omega-N-methylarginine modification. The span at 563 to 618 shows a compositional bias: gly residues; it reads YGGGSGGGSYGGGSGGGSSGSHRGGSGGGGGSSGGSYGGSSGGGRGGSSSGGGGVK. A compositionally biased stretch (polar residues) spans 624-637; that stretch reads TVKFVSTSYSRGTK.

This sequence belongs to the intermediate filament family. As to quaternary structure, heterotetramer of two type I and two type II keratins. Heterodimer with KRT10. Two heterodimers of KRT1 and KRT10 form a heterotetramer. Forms a heterodimer with KRT14; the interaction is more abundant in the absence of KRT5. Interacts with PLEC isoform 1C, when in a heterodimer with KRT10. Interacts with ITGB1 in the presence of RACK1 and SRC, and with RACK1. Interacts with C1QBP; the association represents a cell surface kininogen receptor. Interacts with EPPK1; interaction is dependent of higher-order structure of intermediate filament. Post-translationally, undergoes deimination of some arginine residues (citrullination). As to expression, expressed in the infundibular regions of the ear, the interfollicular epidermis of the back, in the interscale regions containing hair follicles in the tail, and in the soles of the footpads (at protein level).

Its subcellular location is the cell membrane. It is found in the cytoplasm. Its function is as follows. May regulate the activity of kinases such as PKC and SRC via binding to integrin beta-1 (ITB1) and the receptor of activated protein C kinase 1 (RACK1). In complex with C1QBP is a high affinity receptor for kininogen-1/HMWK. The sequence is that of Keratin, type II cytoskeletal 1 (Krt1) from Mus musculus (Mouse).